Consider the following 263-residue polypeptide: Small ribosomal subunit protein eS4 (263 aa).

One can recognise an S4 RNA-binding domain in the interval 42–104 (LPLIIFLRNR…TGEHFRLVYD (63 aa)).

Belongs to the eukaryotic ribosomal protein eS4 family.

This chain is Small ribosomal subunit protein eS4 (RPS4), found in Gallus gallus (Chicken).